The primary structure comprises 38 residues: Large ribosomal subunit protein bL36 (38 aa).

It belongs to the bacterial ribosomal protein bL36 family.

This chain is Large ribosomal subunit protein bL36, found in Chlorobaculum parvum (strain DSM 263 / NCIMB 8327) (Chlorobium vibrioforme subsp. thiosulfatophilum).